The following is a 477-amino-acid chain: Probable malate:quinone oxidoreductase (477 aa).

This sequence belongs to the MQO family. FAD is required as a cofactor.

It carries out the reaction (S)-malate + a quinone = a quinol + oxaloacetate. The protein operates within carbohydrate metabolism; tricarboxylic acid cycle; oxaloacetate from (S)-malate (quinone route): step 1/1. This is Probable malate:quinone oxidoreductase from Synechococcus sp. (strain RCC307).